A 154-amino-acid polypeptide reads, in one-letter code: MPAKAVCVLRGDVSGTVFFDQQDEKSPVVVSGEVQGLTKGKHGFHVHEFGDNTNGCTSAGAHFNPEKQDHGGPSSAVRHVGDLGNIEAIEDSGVTKVSIQDSQISLHGPNSIIGRTLVVHADPDDLGLGGHELSKTTGNAGGRIACGVIGLAKI.

Cu cation contacts are provided by His-45, His-47, and His-62. Cys-56 and Cys-146 are oxidised to a cystine. Residues His-62, His-70, His-79, and Asp-82 each coordinate Zn(2+). Position 120 (His-120) interacts with Cu cation.

It belongs to the Cu-Zn superoxide dismutase family. In terms of assembly, homodimer. Cu cation serves as cofactor. Zn(2+) is required as a cofactor.

It is found in the cytoplasm. The catalysed reaction is 2 superoxide + 2 H(+) = H2O2 + O2. Functionally, destroys radicals which are normally produced within the cells and which are toxic to biological systems. The polypeptide is Superoxide dismutase [Cu-Zn] (Bombyx mori (Silk moth)).